The sequence spans 135 residues: Large ribosomal subunit protein uL16c (135 aa).

Belongs to the universal ribosomal protein uL16 family. In terms of assembly, part of the 50S ribosomal subunit.

Its subcellular location is the plastid. The protein resides in the chloroplast. The chain is Large ribosomal subunit protein uL16c from Drimys granadensis.